Here is a 159-residue protein sequence, read N- to C-terminus: SsrA-binding protein (159 aa).

The interval 134–159 is disordered; the sequence is KLHDKRETSKERDWNRQKNRLLKERG. A compositionally biased stretch (basic and acidic residues) spans 137 to 159; sequence DKRETSKERDWNRQKNRLLKERG.

Belongs to the SmpB family.

The protein resides in the cytoplasm. Required for rescue of stalled ribosomes mediated by trans-translation. Binds to transfer-messenger RNA (tmRNA), required for stable association of tmRNA with ribosomes. tmRNA and SmpB together mimic tRNA shape, replacing the anticodon stem-loop with SmpB. tmRNA is encoded by the ssrA gene; the 2 termini fold to resemble tRNA(Ala) and it encodes a 'tag peptide', a short internal open reading frame. During trans-translation Ala-aminoacylated tmRNA acts like a tRNA, entering the A-site of stalled ribosomes, displacing the stalled mRNA. The ribosome then switches to translate the ORF on the tmRNA; the nascent peptide is terminated with the 'tag peptide' encoded by the tmRNA and targeted for degradation. The ribosome is freed to recommence translation, which seems to be the essential function of trans-translation. This is SsrA-binding protein from Rhizobium meliloti (strain 1021) (Ensifer meliloti).